The following is a 135-amino-acid chain: Protein E6 (135 aa).

2 zinc fingers span residues Cys11–Cys47 and Cys83–Cys119.

The protein belongs to the papillomaviridae E6 protein family. As to quaternary structure, forms homodimers. Interacts with ubiquitin-protein ligase UBE3A/E6-AP; this interaction stimulates UBE3A ubiquitin activity. Interacts with host BAK1.

The protein localises to the host cytoplasm. It localises to the host nucleus. Plays a major role in the induction and maintenance of cellular transformation. E6 associates with host UBE3A/E6-AP ubiquitin-protein ligase and modulates its activity. Protects host keratinocytes from apoptosis by mediating the degradation of host BAK1. May also inhibit host immune response. The chain is Protein E6 from Cervus elaphus (Red deer).